Reading from the N-terminus, the 100-residue chain is MEPIEVFKALSNESRLQILQWLKEPDRHFAPHEGIDMNTIGVCVSQITDKLKMTQSTASQYLTILLRAGLIKAERIGKYTYYKRDEEAIGKLADFLKTEI.

An HTH arsR-type domain is found at 1 to 100 (MEPIEVFKAL…KLADFLKTEI (100 aa)). Positions 44–67 (VSQITDKLKMTQSTASQYLTILLR) form a DNA-binding region, H-T-H motif.

This is an uncharacterized protein from Bacillus subtilis (strain 168).